Consider the following 1020-residue polypeptide: C protein alpha-antigen (1020 aa).

The first 41 residues, 1 to 41 (MFRRSKNNSYDTSQTKQRFSIKKFKFGAASVLIGLSFLGGV), serve as a signal peptide directing secretion. Residues 227–964 (VPDKDKYDPT…EVTVHVTPKP (738 aa)) form a 9 X 82 AA tandem repeats region. Disordered regions lie at residues 261-281 (DGSK…VPGD), 306-330 (PKPV…GTPV), 342-363 (PDGS…VPGD), 388-445 (PKPV…VPGD), 470-494 (PKPV…GTPV), 506-527 (PDGS…VPGD), 552-576 (PKPV…GTPV), 588-610 (PDGS…PGDH), 634-658 (PKPV…GTPV), 670-692 (PDGS…PGDH), 716-740 (PKPV…GTPV), 752-774 (PDGS…PGDH), 798-822 (PKPV…GTPV), 834-856 (PDGS…PGDH), 880-904 (PKPV…GTPV), and 962-989 (PKPV…KLPA). Residues 272-281 (DRPDTNVPGD) show a composition bias toward basic and acidic residues. Residues 320–329 (GETTVPQGTP) show a composition bias toward polar residues. Over residues 354-363 (DRPDTNVPGD) the composition is skewed to basic and acidic residues. Polar residues predominate over residues 402–411 (GETTVPQGTP). Over residues 436–445 (DRPDTNVPGD) the composition is skewed to basic and acidic residues. A compositionally biased stretch (polar residues) spans 484–493 (GETTVPQGTP). A compositionally biased stretch (basic and acidic residues) spans 518 to 527 (DRPDTNVPGD). Residues 566–575 (GETTVPQGTP) are compositionally biased toward polar residues. Residues 600–610 (DRPDTNVPGDH) show a composition bias toward basic and acidic residues. The span at 648–657 (GETTVPQGTP) shows a compositional bias: polar residues. Over residues 682 to 692 (DRPDTNVPGDH) the composition is skewed to basic and acidic residues. Over residues 730–739 (GETTVPQGTP) the composition is skewed to polar residues. Over residues 764–774 (DRPDTNVPGDH) the composition is skewed to basic and acidic residues. Over residues 812–821 (GETTVPQGTP) the composition is skewed to polar residues. The segment covering 846–856 (DRPDTNVPGDH) has biased composition (basic and acidic residues). Positions 894-903 (GETTVPQGTP) are enriched in polar residues. An LPXTG sorting signal motif is present at residues 987–991 (LPATG). T990 carries the post-translational modification Pentaglycyl murein peptidoglycan amidated threonine. The propeptide at 991–1020 (GENATPFFNVAALTIISSVGLLSVSKKKED) is removed by sortase.

The protein localises to the secreted. It is found in the cell wall. In terms of biological role, may play a role in both virulence and immunity. The chain is C protein alpha-antigen (bca) from Streptococcus agalactiae serotype Ia (strain ATCC 27591 / A909 / CDC SS700).